Here is a 152-residue protein sequence, read N- to C-terminus: Aspartate 1-decarboxylase (152 aa).

S24 serves as the catalytic Schiff-base intermediate with substrate; via pyruvic acid. Pyruvic acid (Ser) is present on S24. T56 is a substrate binding site. Y57 functions as the Proton donor in the catalytic mechanism. Residue 72 to 74 (GAA) participates in substrate binding.

This sequence belongs to the PanD family. As to quaternary structure, heterooctamer of four alpha and four beta subunits. Pyruvate serves as cofactor. Post-translationally, is synthesized initially as an inactive proenzyme, which is activated by self-cleavage at a specific serine bond to produce a beta-subunit with a hydroxyl group at its C-terminus and an alpha-subunit with a pyruvoyl group at its N-terminus.

The protein localises to the cytoplasm. It carries out the reaction L-aspartate + H(+) = beta-alanine + CO2. It functions in the pathway cofactor biosynthesis; (R)-pantothenate biosynthesis; beta-alanine from L-aspartate: step 1/1. Catalyzes the pyruvoyl-dependent decarboxylation of aspartate to produce beta-alanine. This is Aspartate 1-decarboxylase from Methylobacterium nodulans (strain LMG 21967 / CNCM I-2342 / ORS 2060).